The following is a 172-amino-acid chain: NAD(P)H-quinone oxidoreductase subunit I, chloroplastic (172 aa).

2 consecutive 4Fe-4S ferredoxin-type domains span residues 55–84 (GRIH…VDWK) and 95–124 (LNYS…MTEE). [4Fe-4S] cluster contacts are provided by Cys64, Cys67, Cys70, Cys74, Cys104, Cys107, Cys110, and Cys114.

It belongs to the complex I 23 kDa subunit family. NDH is composed of at least 16 different subunits, 5 of which are encoded in the nucleus. [4Fe-4S] cluster serves as cofactor.

The protein localises to the plastid. It localises to the chloroplast thylakoid membrane. It catalyses the reaction a plastoquinone + NADH + (n+1) H(+)(in) = a plastoquinol + NAD(+) + n H(+)(out). It carries out the reaction a plastoquinone + NADPH + (n+1) H(+)(in) = a plastoquinol + NADP(+) + n H(+)(out). Its function is as follows. NDH shuttles electrons from NAD(P)H:plastoquinone, via FMN and iron-sulfur (Fe-S) centers, to quinones in the photosynthetic chain and possibly in a chloroplast respiratory chain. The immediate electron acceptor for the enzyme in this species is believed to be plastoquinone. Couples the redox reaction to proton translocation, and thus conserves the redox energy in a proton gradient. This chain is NAD(P)H-quinone oxidoreductase subunit I, chloroplastic, found in Arabidopsis thaliana (Mouse-ear cress).